The sequence spans 300 residues: ADP-polyphosphate phosphotransferase 1 (300 aa).

It belongs to the polyphosphate kinase 2 (PPK2) family. Class I subfamily. As to quaternary structure, homotetramer. Mg(2+) is required as a cofactor.

It catalyses the reaction [phosphate](n) + ATP = [phosphate](n+1) + ADP. The catalysed reaction is [phosphate](n) + GTP = [phosphate](n+1) + GDP. Its function is as follows. Uses inorganic polyphosphate (polyP) as a donor to convert ADP to ATP. Can also convert GDP to GTP, with lower efficiency. Cannot dephosphorylate ATP in the presence of polyP. The protein is ADP-polyphosphate phosphotransferase 1 of Rhizobium meliloti (strain 1021) (Ensifer meliloti).